Consider the following 429-residue polypeptide: Probable E3 ubiquitin-protein ligase makorin-1 (429 aa).

3 C3H1-type zinc fingers span residues 18–45 (WTKH…HDLT), 48–75 (KPAA…HCKP), and 153–180 (ELRK…HGDV). A makorin-type Cys-His region spans residues 181-208 (CDMCGLQVLHPTDSSQRSEHTKACIEAH). The segment at 226–280 (CGVCMEVVFEKANPSERRFGILSNCSHCYCLKCIRKWRSAKQFESKIIKSCPECR) adopts an RING-type zinc-finger fold. Residues 309 to 338 (GMGRKPCRYFDEGRGICPFGANCFYKHAFP) form a C3H1-type 4 zinc finger. A disordered region spans residues 343–362 (EEAQPQRRQTGSSSRNRNSR). Low complexity predominate over residues 348 to 358 (QRRQTGSSSRN).

It catalyses the reaction S-ubiquitinyl-[E2 ubiquitin-conjugating enzyme]-L-cysteine + [acceptor protein]-L-lysine = [E2 ubiquitin-conjugating enzyme]-L-cysteine + N(6)-ubiquitinyl-[acceptor protein]-L-lysine.. It functions in the pathway protein modification; protein ubiquitination. Its function is as follows. E3 ubiquitin ligase catalyzing the covalent attachment of ubiquitin moieties onto substrate proteins. The protein is Probable E3 ubiquitin-protein ligase makorin-1 of Takifugu rubripes (Japanese pufferfish).